The chain runs to 382 residues: SPRY domain-containing protein C285.10c (382 aa).

A helical transmembrane segment spans residues 21–41 (LAILFIFIALAAVIVLLICLL). Positions 79–284 (GFSLLDDMGK…LHVNLGQAGY (206 aa)) constitute a B30.2/SPRY domain. The interval 304–382 (APPPSYSTSQ…MHSMPATDEV (79 aa)) is disordered. 2 stretches are compositionally biased toward polar residues: residues 309–334 (YSTSQPTISWDAASESSAGTTTQGDT) and 361–372 (FSPSSSNNQAYQ).

It localises to the cytoplasm. It is found in the membrane. This chain is SPRY domain-containing protein C285.10c, found in Schizosaccharomyces pombe (strain 972 / ATCC 24843) (Fission yeast).